The following is a 255-amino-acid chain: Proteasome subunit alpha type-3 (255 aa).

Ser2 is modified (N-acetylserine). An N6-acetyllysine mark is found at Lys57, Lys206, and Lys230. Phosphoserine occurs at positions 243 and 250.

This sequence belongs to the peptidase T1A family. As to quaternary structure, the 26S proteasome consists of a 20S proteasome core and two 19S regulatory subunits. The 20S proteasome core is a barrel-shaped complex made of 28 subunits that are arranged in four stacked rings. The two outer rings are each formed by seven alpha subunits, and the two inner rings are formed by seven beta subunits. The proteolytic activity is exerted by three beta-subunits PSMB5, PSMB6 and PSMB7. Interacts with AURKB. Interacts with CDKN1A. Interacts with MDM2 and RB1. Interacts with the C-terminus of TBXA2R isoform 2. Interacts with DNAJB2.

It localises to the cytoplasm. It is found in the nucleus. Functionally, component of the 20S core proteasome complex involved in the proteolytic degradation of most intracellular proteins. This complex plays numerous essential roles within the cell by associating with different regulatory particles. Associated with two 19S regulatory particles, forms the 26S proteasome and thus participates in the ATP-dependent degradation of ubiquitinated proteins. The 26S proteasome plays a key role in the maintenance of protein homeostasis by removing misfolded or damaged proteins that could impair cellular functions, and by removing proteins whose functions are no longer required. Associated with the PA200 or PA28, the 20S proteasome mediates ubiquitin-independent protein degradation. This type of proteolysis is required in several pathways including spermatogenesis (20S-PA200 complex) or generation of a subset of MHC class I-presented antigenic peptides (20S-PA28 complex). Binds to the C-terminus of CDKN1A and thereby mediates its degradation. Negatively regulates the membrane trafficking of the cell-surface thromboxane A2 receptor (TBXA2R) isoform 2. The protein is Proteasome subunit alpha type-3 (PSMA3) of Bos taurus (Bovine).